A 389-amino-acid chain; its full sequence is Endo-chitosanase C (389 aa).

Residues 1–22 (MPIKSFASRLALSLAICGTAMG) form the signal peptide. The R3-1 repeat unit spans residues 280–313 (CSWPGHCAGFKNKGATCSSNDDCSDDLACQNGKC). One copy of the R3-2 repeat lies at 320-350 (ETCSWEGHCKGATCSSNDDCSDELACISGIC). One copy of the R3-3 repeat lies at 357–387 (ETCEWEGHCEGASCSSHDDCDGNLACKNGKC).

The protein belongs to the glycosyl hydrolase 75 family.

It localises to the secreted. It catalyses the reaction Endohydrolysis of beta-(1-&gt;4)-linkages between D-glucosamine residues in a partly acetylated chitosan.. Functionally, chitosanase catalyzing the endo-type cleavage of chitosan, the deacylated form of chitin. Chitosanase may be crucial in the degradation of the deacetylated portion of chitin in the fungal cell wall. Chitoolisaccharides produced by the hydrolysis of partially N-acetylated chitosan are known to have many biological activities, including antibacterial activity, immune-enhancing effects, and elicitor activity. The chain is Endo-chitosanase C (csnC) from Aspergillus oryzae (strain ATCC 42149 / RIB 40) (Yellow koji mold).